Reading from the N-terminus, the 273-residue chain is Octanoyltransferase LipM (273 aa).

One can recognise a BPL/LPL catalytic domain in the interval 32–240; the sequence is GEIPPTLRFY…GFSEILNIEL (209 aa). Catalysis depends on Cys142, which acts as the Acyl-thioester intermediate.

This sequence belongs to the octanoyltransferase LipM family. In terms of assembly, monomer.

The catalysed reaction is octanoyl-[ACP] + L-lysyl-[protein] = N(6)-octanoyl-L-lysyl-[protein] + holo-[ACP] + H(+). It functions in the pathway protein modification; protein lipoylation via endogenous pathway; protein N(6)-(lipoyl)lysine from octanoyl-[acyl-carrier-protein]. In terms of biological role, catalyzes the transfer of endogenously produced octanoic acid from octanoyl-acyl-carrier-protein onto the lipoyl domain of GcvH, an intermediate carrier during protein lipoylation. The polypeptide is Octanoyltransferase LipM (Oceanobacillus iheyensis (strain DSM 14371 / CIP 107618 / JCM 11309 / KCTC 3954 / HTE831)).